The primary structure comprises 335 residues: MRN complex-interacting protein (335 aa).

Disordered stretches follow at residues Glu-75–Pro-102 and Gln-118–Thr-194. The residue at position 100 (Ser-100) is a Phosphoserine. Positions Thr-129 to Ala-142 are enriched in polar residues. Positions Arg-145 to Lys-148 match the Nuclear localization signal (NLS) motif. The segment covering Ser-177–Thr-194 has biased composition (polar residues). Residues Phe-203–Gly-230 are necessary for the association with the MRN complex. Residues Arg-273–Leu-335 are disordered. The span at Asp-286 to Arg-297 shows a compositional bias: basic and acidic residues.

Belongs to the MRNIP family. In terms of assembly, associates with the MRE11-RAD50-NBN (MRN) damage-sensing complex; this association is constitutive. Interacts with MRE11. Interacts with NBN. Interacts with RAD50. Post-translationally, phosphorylated; phosphorylation is constitutive and occurs in the absence of any DNA-damaging stimulus. Phosphorylation is necessary for its nuclear retention.

It localises to the nucleus. The protein resides in the nucleoplasm. Functionally, plays a role in the cellular response to DNA damage and the maintenance of genome stability through its association with the MRN damage-sensing complex. Promotes chromatin loading and activity of the MRN complex to facilitate subsequent ATM-mediated DNA damage response signaling and DNA repair. This chain is MRN complex-interacting protein, found in Mus musculus (Mouse).